The primary structure comprises 1266 residues: Intermembrane phospholipid transporter YhdP (1266 aa).

The Cytoplasmic portion of the chain corresponds to methionine 1–proline 5. The helical transmembrane segment at glycine 6 to leucine 26 threads the bilayer. Residues arginine 27–glutamine 1266 are Periplasmic-facing. Positions valine 94 to tryptophan 103 are P-helix. Positions histidine 1121 to aspartate 1144 are C-helix_2. The segment at isoleucine 1203–valine 1237 is C-helix_1.

It localises to the cell inner membrane. Functionally, involved in outer membrane lipid homeostasis. Likely transports phospholipids between the inner membrane and the outer membrane. It would provide a bridge-like structure that protects phospholipids as they travel across the periplasm. The phosphate-containing molecules are captured along the length of a hydrophobic groove that is continuous along all but the extreme N-terminus of the protein. It also appears to control, directly or indirectly, levels of cyclic enterobacterial common antigen (cyclic ECA), a soluble cyclic ECA molecule present in the periplasm. TamB, YdbH and YhdP are redundant, but not equivalent, in performing an essential function for growth and maintaining lipid homeostasis in the outer membrane. The transport functions of TamB and YhdP could be differentiated according to the fatty acid saturation state of the phospholipids, with TamB transporting more unsaturated phospholipids and YhdP more saturated phospholipids. Any of these three proteins is sufficient for growth. The protein is Intermembrane phospholipid transporter YhdP (yhdP) of Escherichia coli (strain K12).